We begin with the raw amino-acid sequence, 477 residues long: MSRFSGALQLTDLDDFITPSQECIKPVTIDKTKSKTGAKITVQEDGYYEESEESGKQKLQKVEITLQDCLACSGCITSAEGVLITQQSQEELLKVLRENQKLKATGDNDLVQTIVFTISMQPILSLAHRYQLSVEETARHLSGYFRNLGADYVLCTKVADDLALIECRQEFVERFRDKEDLTMLSSSCPGWVCYAEKTHGNFILPYIATTRSPQQIMGVLVKHFLAEKFNVPGSRIYHATVMPCYDKKLEASREDFYSEVNGSRDVDCVITSIEVEQMLMEDERSLSQHEPVDLDWPWTDQRPESMIWAHEATMSGGYAEHIFKYAAKELFSEDTDNELKFKQLRNRDFREISLEKDDKTVLKFAIANGFRNIQNLVQKLKRGKGANYHFVEVMACPSGCINGGAQVRPTTGQHVRELTQQLEELYKKLPISQPDNSHTKAIYGDFLDGAHTDKSHDLLHTSYHAVEKLNTALNIKW.

Cysteine 23, cysteine 69, cysteine 72, cysteine 75, cysteine 188, cysteine 244, cysteine 396, and cysteine 400 together coordinate [4Fe-4S] cluster.

This sequence belongs to the NARF family.

Functionally, component of the cytosolic iron-sulfur (Fe/S) protein assembly machinery. Required for maturation of extramitochondrial Fe/S proteins. The chain is Probable cytosolic Fe-S cluster assembly factor GK14772 from Drosophila willistoni (Fruit fly).